Here is a 542-residue protein sequence, read N- to C-terminus: Chromatin structure-remodeling complex subunit rsc4 (542 aa).

A Bromo 1 domain is found at histidine 6–aspartate 116. Disordered stretches follow at residues serine 114–threonine 139 and isoleucine 246–glutamate 327. Over residues leucine 119–glutamate 128 the composition is skewed to acidic residues. Positions threonine 139–phenylalanine 249 constitute a Bromo 2 domain. The segment covering glutamine 252–glutamate 266 has biased composition (basic and acidic residues). Phosphoserine is present on residues serine 257, serine 271, serine 287, and serine 313. Residues threonine 268–threonine 280 show a composition bias toward low complexity. Over residues threonine 286–alanine 298 the composition is skewed to polar residues. The segment covering leucine 304–glutamine 322 has biased composition (basic and acidic residues).

In terms of assembly, component of the RSC complex composed of at least arp9, arp42, rsc1, rsc4, rsc7, rsc9, rsc58, sfh1, snf21, ssr1, ssr2, ssr3 and ssr4. The complex interacts with histone and histone variant components of centromeric chromatin.

The protein resides in the nucleus. Component of the chromatin structure remodeling complex (RSC), which is involved in transcription regulation and nucleosome positioning. Controls particularly membrane and organelle development genes. This Schizosaccharomyces pombe (strain 972 / ATCC 24843) (Fission yeast) protein is Chromatin structure-remodeling complex subunit rsc4 (rsc4).